We begin with the raw amino-acid sequence, 100 residues long: Integration host factor subunit alpha (100 aa).

This sequence belongs to the bacterial histone-like protein family. As to quaternary structure, heterodimer of an alpha and a beta chain.

Functionally, this protein is one of the two subunits of integration host factor, a specific DNA-binding protein that functions in genetic recombination as well as in transcriptional and translational control. In Ruegeria sp. (strain TM1040) (Silicibacter sp.), this protein is Integration host factor subunit alpha.